Here is a 356-residue protein sequence, read N- to C-terminus: UDP-N-acetylglucosamine--N-acetylmuramyl-(pentapeptide) pyrophosphoryl-undecaprenol N-acetylglucosamine transferase (356 aa).

Positions 195 and 287 each coordinate UDP-N-acetyl-alpha-D-glucosamine.

The protein belongs to the glycosyltransferase 28 family. MurG subfamily.

Its subcellular location is the cell membrane. It catalyses the reaction Mur2Ac(oyl-L-Ala-gamma-D-Glu-L-Lys-D-Ala-D-Ala)-di-trans,octa-cis-undecaprenyl diphosphate + UDP-N-acetyl-alpha-D-glucosamine = beta-D-GlcNAc-(1-&gt;4)-Mur2Ac(oyl-L-Ala-gamma-D-Glu-L-Lys-D-Ala-D-Ala)-di-trans,octa-cis-undecaprenyl diphosphate + UDP + H(+). Its pathway is cell wall biogenesis; peptidoglycan biosynthesis. Functionally, cell wall formation. Catalyzes the transfer of a GlcNAc subunit on undecaprenyl-pyrophosphoryl-MurNAc-pentapeptide (lipid intermediate I) to form undecaprenyl-pyrophosphoryl-MurNAc-(pentapeptide)GlcNAc (lipid intermediate II). The protein is UDP-N-acetylglucosamine--N-acetylmuramyl-(pentapeptide) pyrophosphoryl-undecaprenol N-acetylglucosamine transferase of Streptococcus gordonii (strain Challis / ATCC 35105 / BCRC 15272 / CH1 / DL1 / V288).